The primary structure comprises 1296 residues: Clustered mitochondria protein homolog (1296 aa).

A disordered region spans residues 1 to 31 (MTLMNGDGAHEHQAEAEPKQNGHEMGDQTEE). Over residues 8 to 26 (GAHEHQAEAEPKQNGHEMG) the composition is skewed to basic and acidic residues. Residues 333–575 (RAEDAYTSRL…RTFPPDLNFL (243 aa)) form the Clu domain. The stretch at 662 to 689 (LDGEAQLKQLEETMAAHKETVDTRSKEV) forms a coiled coil. 4 TPR repeats span residues 970–1003 (AFHFFQSGQAKVQQGYLKEGCELINEALNLFNNV), 1012–1045 (CACLRLLARLNYIMGDYSEALSNQQKAVLMSERI), 1096–1129 (ALLDSNIGLVLHGVMEYDLSLRFLENALTINSKY), and 1138–1171 (ALSHHLVARVYETKGEFRSALQHEKDGYTIYKNQ). Residues 1242-1274 (QKDLEHLKAEVQRRQQLQEAIKGAENHEAKTKE) are a coiled coil. The tract at residues 1261–1296 (AIKGAENHEAKTKEPEMSETSDSNINAASVAPESSD) is disordered. Positions 1263-1276 (KGAENHEAKTKEPE) are enriched in basic and acidic residues. Residues 1278-1296 (SETSDSNINAASVAPESSD) show a composition bias toward polar residues.

The protein belongs to the CLU family.

It is found in the cytoplasm. The protein resides in the cytoplasmic granule. In terms of biological role, mRNA-binding protein involved in proper cytoplasmic distribution of mitochondria. Specifically binds mRNAs of nuclear-encoded mitochondrial proteins in the cytoplasm and regulates transport or translation of these transcripts close to mitochondria, playing a role in mitochondrial biogenesis. The sequence is that of Clustered mitochondria protein homolog from Xenopus tropicalis (Western clawed frog).